The sequence spans 749 residues: Basic juvenile hormone-suppressible protein 2 (749 aa).

An N-terminal signal peptide occupies residues 1-14 (MRAVLLFVVSLAAL).

It belongs to the hemocyanin family. As to expression, fat body, and hemolymph of larvae.

This chain is Basic juvenile hormone-suppressible protein 2 (BJSP-2), found in Trichoplusia ni (Cabbage looper).